The following is a 240-amino-acid chain: Purine nucleoside phosphorylase DeoD-type (240 aa).

An a purine D-ribonucleoside-binding site is contributed by His5. Residues Gly21, Arg25, Arg44, and 88–91 (RVGS) contribute to the phosphate site. A purine D-ribonucleoside contacts are provided by residues 180–182 (EME) and 204–205 (SD). Residue Asp205 is the Proton donor of the active site.

This sequence belongs to the PNP/UDP phosphorylase family. In terms of assembly, homohexamer; trimer of homodimers.

It carries out the reaction a purine D-ribonucleoside + phosphate = a purine nucleobase + alpha-D-ribose 1-phosphate. It catalyses the reaction a purine 2'-deoxy-D-ribonucleoside + phosphate = a purine nucleobase + 2-deoxy-alpha-D-ribose 1-phosphate. In terms of biological role, catalyzes the reversible phosphorolytic breakdown of the N-glycosidic bond in the beta-(deoxy)ribonucleoside molecules, with the formation of the corresponding free purine bases and pentose-1-phosphate. In Actinobacillus pleuropneumoniae serotype 5b (strain L20), this protein is Purine nucleoside phosphorylase DeoD-type.